The primary structure comprises 484 residues: Sperm motility kinase 2B (484 aa).

A Protein kinase domain is found at 8-256; sequence YVMLETIGHG…VAEVMVHPWV (249 aa). ATP-binding positions include 14–22 and K37; that span reads IGHGGCSKV. Residue D127 is the Proton acceptor of the active site. Residues 272–314 enclose the UBA domain; sequence PLKPNPAIVKAMGYIGFQAQDIEDSLRQRKFNETMASYCLLKK. Polar residues-rich tracts occupy residues 356–373 and 422–434; these read PTSL…CGRS and SSDD…TSAS. Disordered stretches follow at residues 356–400 and 422–450; these read PTSL…TMDH and SSDD…RGIK.

Belongs to the protein kinase superfamily. CAMK Ser/Thr protein kinase family. Smok subfamily. Testis-specific. Expressed in the testis from 22 days postpartum (22 dpp).

It catalyses the reaction L-seryl-[protein] + ATP = O-phospho-L-seryl-[protein] + ADP + H(+). The catalysed reaction is L-threonyl-[protein] + ATP = O-phospho-L-threonyl-[protein] + ADP + H(+). Its function is as follows. May play a role in sperm motility, especially in the regulation of flagellar function. This chain is Sperm motility kinase 2B, found in Mus musculus (Mouse).